The sequence spans 534 residues: Lysophosphatidylcholine acyltransferase 1 (534 aa).

A disordered region spans residues 1-25; it reads MRLRGRGPRAAPSSSSGAGDARRLA. Residues 1–57 lie on the Cytoplasmic side of the membrane; it reads MRLRGRGPRAAPSSSSGAGDARRLAPPGRNPFVHELRLSALQKAQVAFMTLTLFPIR. Low complexity predominate over residues 8 to 19; sequence PRAAPSSSSGAG. Residues 58-78 traverse the membrane as a helical; Signal-anchor for type II membrane protein segment; it reads LLFAAFMMLLAWPFALVASLG. Residues 79-534 are Lumenal-facing; that stretch reads PPDKEPEQPL…GRKNSCKKVD (456 aa). The HXXXXD motif signature appears at 135–140; it reads HSSYFD. EF-hand domains follow at residues 379 to 414 and 451 to 486; these read PVSD…VCRP and ISEL…YPDF. Aspartate 392, serine 394, glutamate 398, and glutamate 403 together coordinate Ca(2+). Residues 531–534 carry the Di-lysine motif motif; it reads KKVD.

Belongs to the 1-acyl-sn-glycerol-3-phosphate acyltransferase family. In terms of tissue distribution, enriched in alveolar type II cells of lung. Also highly expressed in stomach.

The protein localises to the endoplasmic reticulum membrane. It localises to the golgi apparatus membrane. It is found in the cell membrane. Its subcellular location is the lipid droplet. It carries out the reaction a 1-acyl-sn-glycero-3-phosphocholine + an acyl-CoA = a 1,2-diacyl-sn-glycero-3-phosphocholine + CoA. The enzyme catalyses a 1-O-alkyl-sn-glycero-3-phosphocholine + acetyl-CoA = a 1-O-alkyl-2-acetyl-sn-glycero-3-phosphocholine + CoA. The catalysed reaction is a 1-acyl-sn-glycero-3-phosphate + an acyl-CoA = a 1,2-diacyl-sn-glycero-3-phosphate + CoA. It catalyses the reaction a 1-O-(1Z-alkenyl)-sn-glycero-3-phosphocholine + an acyl-CoA = a 1-O-(1Z-alkenyl)-2-acyl-sn-glycero-3-phosphocholine + CoA. It carries out the reaction 1-acyl-sn-glycero-3-phospho-(1'-sn-glycerol) + an acyl-CoA = a 1,2-diacyl-sn-glycero-3-phospho-(1'-sn-glycerol) + CoA. The enzyme catalyses a 1-acyl-sn-glycero-3-phosphocholine + hexadecanoyl-CoA = 1-acyl-2-hexadecanoyl-sn-glycero-3-phosphocholine + CoA. The catalysed reaction is a 1-acyl-sn-glycero-3-phosphate + hexadecanoyl-CoA = 1-acyl-2-hexadecanoyl-sn-glycero-3-phosphate + CoA. It catalyses the reaction 1-acyl-sn-glycero-3-phospho-(1'-sn-glycerol) + hexadecanoyl-CoA = 1-acyl-2-hexadecanoyl-sn-glycero-3-phospho-(1'-sn-glycerol) + CoA. It carries out the reaction 1-hexadecanoyl-sn-glycero-3-phosphocholine + hexadecanoyl-CoA = 1,2-dihexadecanoyl-sn-glycero-3-phosphocholine + CoA. The enzyme catalyses 1-O-hexadecyl-sn-glycero-3-phosphocholine + hexadecanoyl-CoA = 1-O-hexadecyl-2-hexadecanoyl-sn-glycero-3-phosphocholine + CoA. The catalysed reaction is a 1-O-(1Z-alkenyl)-sn-glycero-3-phosphocholine + hexadecanoyl-CoA = 1-O-(1Z)-alkenyl-2-hexadecanoyl-sn-glycero-3-phosphocholine + CoA. It catalyses the reaction 1-hexadecanoyl-sn-glycero-3-phospho-(1'-sn-glycerol) + hexadecanoyl-CoA = 1,2-dihexadecanoyl-sn-glycero-3-phospho-(1'-sn-glycerol) + CoA. It carries out the reaction 1-dodecanoyl-sn-glycero-3-phosphocholine + hexadecanoyl-CoA = 1-dodecanoyl-2-hexadecanoyl-sn-glycero-3-phosphocholine + CoA. The enzyme catalyses 1-tetradecanoyl-sn-glycero-3-phosphocholine + hexadecanoyl-CoA = 1-tetradecanoyl-2-hexadecanoyl-sn-glycero-3-phosphocholine + CoA. The catalysed reaction is 1-O-octadecyl-sn-glycero-3-phosphocholine + hexadecanoyl-CoA = 1-O-octadecyl-2-hexadecanoyl-sn-glycero-3-phosphocholine + CoA. It catalyses the reaction 1-octadecanoyl-sn-glycero-3-phosphocholine + hexadecanoyl-CoA = 1-octadecanoyl-2-hexadecanoyl-sn-glycero-3-phosphocholine + CoA. It carries out the reaction 1-(9Z-octadecenoyl)-sn-glycero-3-phosphocholine + hexadecanoyl-CoA = 1-(9Z-octadecenoyl)-2-hexadecanoyl-sn-glycero-3-phosphocholine + CoA. The enzyme catalyses 1-eicosanoyl-sn-glycero-3-phosphocholine + hexadecanoyl-CoA = 1-eicosanoyl-2-hexadecanoyl-sn-glycero-3-phosphocholine + CoA. The catalysed reaction is hexanoyl-CoA + 1-hexadecanoyl-sn-glycero-3-phosphocholine = 1-hexadecanoyl-2-hexanoyl-sn-glycero-3-phosphocholine + CoA. It catalyses the reaction octanoyl-CoA + 1-hexadecanoyl-sn-glycero-3-phosphocholine = 1-hexadecanoyl-2-octanoyl-sn-glycero-3-phosphocholine + CoA. It carries out the reaction decanoyl-CoA + 1-hexadecanoyl-sn-glycero-3-phosphocholine = 1-hexadecanoyl-2-decanoyl-sn-glycero-3-phosphocholine + CoA. The enzyme catalyses dodecanoyl-CoA + 1-hexadecanoyl-sn-glycero-3-phosphocholine = 1-hexadecanoyl-2-dodecanoyl-sn-glycero-3-phosphocholine + CoA. The catalysed reaction is tetradecanoyl-CoA + 1-hexadecanoyl-sn-glycero-3-phosphocholine = 1-hexadecanoyl-2-tetradecanoyl-sn-glycero-3-phosphocholine + CoA. It catalyses the reaction 1-hexadecanoyl-sn-glycero-3-phosphocholine + (9Z)-octadecenoyl-CoA = 1-hexadecanoyl-2-(9Z-octadecenoyl)-sn-glycero-3-phosphocholine + CoA. It carries out the reaction (9Z,12Z)-octadecadienoyl-CoA + 1-hexadecanoyl-sn-glycero-3-phosphocholine = 1-hexadecanoyl-2-(9Z,12Z-octadecadienoyl)-sn-glycero-3-phosphocholine + CoA. The enzyme catalyses (4Z,7Z,10Z,13Z,16Z,19Z)-docosahexaenoyl-CoA + 1-hexadecanoyl-sn-glycero-3-phosphocholine = 1-hexadecanoyl-2-(4Z,7Z,10Z,13Z,16Z,19Z-docosahexaenoyl)-sn-glycero-3-phosphocholine + CoA. The catalysed reaction is 1-hexadecanoyl-sn-glycero-3-phosphocholine + acetyl-CoA = 1-hexadecanoyl-2-acetyl-sn-glycero-3-phosphocholine + CoA. It catalyses the reaction eicosanoyl-CoA + 1-hexadecanoyl-sn-glycero-3-phosphocholine = 1-hexadecanoyl-2-eicosanoyl-sn-glycero-3-phosphocholine + CoA. It carries out the reaction 1-O-hexadecyl-sn-glycero-3-phosphocholine + acetyl-CoA = 1-O-hexadecyl-2-acetyl-sn-glycero-3-phosphocholine + CoA. Its pathway is lipid metabolism; phospholipid metabolism. Its activity is regulated as follows. Activity is stimulated by Mg(2+) or Mn(2+). Functionally, exhibits acyltransferase activity. Exhibits acetyltransferase activity. Activity is calcium-independent. Catalyzes the conversion of lysophosphatidylcholine (1-acyl-sn-glycero-3-phosphocholine or LPC) into phosphatidylcholine (1,2-diacyl-sn-glycero-3-phosphocholine or PC). Catalyzes the conversion 1-acyl-sn-glycerol-3-phosphate (lysophosphatidic acid or LPA) into 1,2-diacyl-sn-glycerol-3-phosphate (phosphatidic acid or PA) by incorporating an acyl moiety at the sn-2 position of the glycerol backbone. Displays a clear preference for saturated fatty acyl-CoAs, and 1-myristoyl or 1-palmitoyl LPC as acyl donors and acceptors, respectively. Involved in platelet-activating factor (PAF) biosynthesis by catalyzing the conversion of the PAF precursor, 1-O-alkyl-sn-glycero-3-phosphocholine (lyso-PAF) into 1-O-alkyl-2-acetyl-sn-glycero-3-phosphocholine (PAF). May synthesize phosphatidylcholine in pulmonary surfactant, thereby playing a pivotal role in respiratory physiology. Involved in the regulation of lipid droplet number and size. This is Lysophosphatidylcholine acyltransferase 1 (Lpcat1) from Rattus norvegicus (Rat).